The chain runs to 56 residues: Large ribosomal subunit protein bL32 (56 aa).

The interval 1–38 is disordered; it reads MAVQQNKKSRSKRGMRRSHDSLSTAQLSVDATSGELHR. Positions 7–16 are enriched in basic residues; that stretch reads KKSRSKRGMR. Positions 21-31 are enriched in polar residues; it reads SLSTAQLSVDA.

The protein belongs to the bacterial ribosomal protein bL32 family.

The sequence is that of Large ribosomal subunit protein bL32 from Shewanella woodyi (strain ATCC 51908 / MS32).